The sequence spans 108 residues: uncharacterized protein (108 aa).

A helical membrane pass occupies residues 59–81; the sequence is NIVIILWKIMVVIISSIIHRTYI.

The protein resides in the membrane. This is an uncharacterized protein from Rickettsia conorii (strain ATCC VR-613 / Malish 7).